A 496-amino-acid polypeptide reads, in one-letter code: Aldehyde dehydrogenase (496 aa).

Residues Glu263 and Cys296 contribute to the active site.

It belongs to the aldehyde dehydrogenase family.

Its subcellular location is the cytoplasm. The catalysed reaction is an aldehyde + NAD(+) + H2O = a carboxylate + NADH + 2 H(+). In Davidiella tassiana (Mycosphaerella tassiana), this protein is Aldehyde dehydrogenase (CLAH10).